The sequence spans 124 residues: Riboflavin kinase (124 aa).

CDP is bound at residue 10 to 15 (GLGKAA). 2 residues coordinate Mg(2+): T39 and N41. FMN-binding residues include T93 and E101. Residue 106-109 (DKLR) coordinates CDP.

It belongs to the archaeal riboflavin kinase family. Requires Mg(2+) as cofactor.

It carries out the reaction riboflavin + CTP = CDP + FMN + H(+). It functions in the pathway cofactor biosynthesis; FMN biosynthesis; FMN from riboflavin (CTP route): step 1/1. Its function is as follows. Catalyzes the CTP-dependent phosphorylation of riboflavin (vitamin B2) to form flavin mononucleotide (FMN). The polypeptide is Riboflavin kinase (Methanobrevibacter smithii (strain ATCC 35061 / DSM 861 / OCM 144 / PS)).